The primary structure comprises 397 residues: Elongation factor Tu (397 aa).

In terms of domain architecture, tr-type G spans 10–206 (KPHVNIGTIG…HIDTYIPEPT (197 aa)). Residues 19–26 (GHVDHGKT) form a G1 region. GTP is bound at residue 19 to 26 (GHVDHGKT). Threonine 26 lines the Mg(2+) pocket. The G2 stretch occupies residues 61–65 (GITIS). The G3 stretch occupies residues 82 to 85 (DCPG). Residues 82–86 (DCPGH) and 137–140 (NKCD) each bind GTP. The G4 stretch occupies residues 137–140 (NKCD). Positions 175–177 (SAL) are G5.

Belongs to the TRAFAC class translation factor GTPase superfamily. Classic translation factor GTPase family. EF-Tu/EF-1A subfamily. In terms of assembly, monomer.

It is found in the cytoplasm. The catalysed reaction is GTP + H2O = GDP + phosphate + H(+). Functionally, GTP hydrolase that promotes the GTP-dependent binding of aminoacyl-tRNA to the A-site of ribosomes during protein biosynthesis. This is Elongation factor Tu from Alkaliphilus oremlandii (strain OhILAs) (Clostridium oremlandii (strain OhILAs)).